Consider the following 335-residue polypeptide: Homeobox protein DBX1 (335 aa).

Disordered regions lie at residues 58–102 (IPAA…LSPA) and 240–335 (KERE…ITVS). Over residues 83 to 95 (GSPGSGSRRGSSP) the composition is skewed to low complexity. Residues 181-240 (GMLRRAVFSDVQRKALEKTFQKQKYISKPDRKKLASKLGLKDSQVKIWFQNRRMKWRNSK) constitute a DNA-binding region (homeobox). Low complexity predominate over residues 299 to 317 (GPLPASPAHSSSPGKPSDF). Residues 318 to 335 (SDSDEDEEGEEDEEITVS) show a composition bias toward acidic residues.

It belongs to the H2.0 homeobox family.

It localises to the nucleus. Functionally, could have a role in patterning the central nervous system during embryogenesis. Has a key role in regulating the distinct phenotypic features that distinguish two major classes of ventral interneurons, V0 and V1 neurons. Regulates the transcription factor profile, neurotransmitter phenotype, intraspinal migratory path and axonal trajectory of V0 neurons, features that differentiate them from an adjacent set of V1 neurons. This is Homeobox protein DBX1 (Dbx1) from Mus musculus (Mouse).